Consider the following 123-residue polypeptide: Small ribosomal subunit protein uS12 (123 aa).

Asp-89 carries the post-translational modification 3-methylthioaspartic acid. The segment at 104 to 123 (SVGVKDRKKSRSKYGAKRPK) is disordered. A compositionally biased stretch (basic residues) spans 109-123 (DRKKSRSKYGAKRPK).

It belongs to the universal ribosomal protein uS12 family. As to quaternary structure, part of the 30S ribosomal subunit. Contacts proteins S8 and S17. May interact with IF1 in the 30S initiation complex.

Its function is as follows. With S4 and S5 plays an important role in translational accuracy. Interacts with and stabilizes bases of the 16S rRNA that are involved in tRNA selection in the A site and with the mRNA backbone. Located at the interface of the 30S and 50S subunits, it traverses the body of the 30S subunit contacting proteins on the other side and probably holding the rRNA structure together. The combined cluster of proteins S8, S12 and S17 appears to hold together the shoulder and platform of the 30S subunit. The protein is Small ribosomal subunit protein uS12 of Geotalea daltonii (strain DSM 22248 / JCM 15807 / FRC-32) (Geobacter daltonii).